Consider the following 680-residue polypeptide: WD repeat-containing protein 48 homolog (680 aa).

8 WD repeats span residues 26 to 65, 71 to 110, 113 to 152, 164 to 203, 206 to 245, 248 to 287, 290 to 329, and 350 to 389; these read QHRN…SEKY, HHND…CMST, THRD…ALTA, GSKD…RSMK, GHTE…CVQT, VHKE…NKTL, EEQA…RCTM, and KGGA…KKEQ. Positions 592–616 are disordered; that stretch reads ETTPSGGNANNSLQNSQSDANSEGS.

This sequence belongs to the WD repeat WDR48 family. In terms of assembly, catalytic component of the Usp12-46 deubiquitylase complex consisting of Usp12-46, Wdr20 and Uaf1; regulatory subunit that, together wtih Wdr20, stabilizes Usp12-46. The Usp12-46 deubiquitylase complex associates with arr/arrow; the interaction leads to deubiquitination and stabilization of arr/arrow.

In terms of biological role, regulatory component of the Usp12-46 deubiquitylase complex. activates deubiquitination by increasing the catalytic turnover without increasing the affinity of deubiquitinating enzymes for the substrate. The complex deubiquitylates the wg/wingless-signaling receptor arr/arrow, which stabilizes the receptor and increases its concentration at the cell surface; this enhances the sensitivity of cells to wg/wingless-signal stimulation. This increases the amplitude and spatial range of the signaling response to the wg/wingless morphogen gradient, facilitating the precise concentration-dependent regulation of its target genes. Together with Wdr20 and Usp12-46 required for wg/wingless-mediated signaling in the wing imaginal disc and for wg/wingless-dependent regulation of intestinal stem cell proliferation. In Drosophila yakuba (Fruit fly), this protein is WD repeat-containing protein 48 homolog.